We begin with the raw amino-acid sequence, 291 residues long: Bifunctional protein FolD (291 aa).

Residues 173-175 (GRS) and serine 198 contribute to the NADP(+) site.

This sequence belongs to the tetrahydrofolate dehydrogenase/cyclohydrolase family. In terms of assembly, homodimer.

It carries out the reaction (6R)-5,10-methylene-5,6,7,8-tetrahydrofolate + NADP(+) = (6R)-5,10-methenyltetrahydrofolate + NADPH. The enzyme catalyses (6R)-5,10-methenyltetrahydrofolate + H2O = (6R)-10-formyltetrahydrofolate + H(+). It participates in one-carbon metabolism; tetrahydrofolate interconversion. Catalyzes the oxidation of 5,10-methylenetetrahydrofolate to 5,10-methenyltetrahydrofolate and then the hydrolysis of 5,10-methenyltetrahydrofolate to 10-formyltetrahydrofolate. In Psychrobacter sp. (strain PRwf-1), this protein is Bifunctional protein FolD.